Here is a 186-residue protein sequence, read N- to C-terminus: Adenine phosphoribosyltransferase (186 aa).

Belongs to the purine/pyrimidine phosphoribosyltransferase family. In terms of assembly, homodimer.

The protein resides in the cytoplasm. The enzyme catalyses AMP + diphosphate = 5-phospho-alpha-D-ribose 1-diphosphate + adenine. It participates in purine metabolism; AMP biosynthesis via salvage pathway; AMP from adenine: step 1/1. Its function is as follows. Catalyzes a salvage reaction resulting in the formation of AMP, that is energically less costly than de novo synthesis. The sequence is that of Adenine phosphoribosyltransferase from Xanthomonas oryzae pv. oryzae (strain PXO99A).